The primary structure comprises 498 residues: MASMLSKRLGKRSLLGARVCAPTLSGDGMLVDGQMSIQAEISGGFGAGALEGGYCKEFPEDGSCASAMSPTNRFKLYPGQKVYITHNGKEYVGLVEQHNHVDDEVKLFVLELGLHLCRKMEDVRLAETQKPLSSPIEQSLPTSPGATSTSAQRSVSRSIDVPKRRSDAVEMDEMMAAMVLTSLSCSPIVQSPPCTDSIPAPRVTCDLWKEGGDVSDSGSSTTSGHWSASSGVSTPSPPHTDASPKYTSEVFSASHVDEGFETDPDPFLLDEPAPRKRKNSVKIMYKCLWPNCGKLLRSIVGIKRHVKTQHLGDGLDSDQRKREEDFYYTEVQMKEDPEAEPTPKSPSSATAPLLIQPVPAKPETHAIEVPSVESPLSSALSQSAPGSFWHIQTDHAYQALSSIQIPVSPHIFTSISWAAASSTIPTLSPIRSRSLSFSEQQQQAIKSHLIVASPPRPSNGNRKIRGEAKKCRKVYGIEHRDQWCTACRWKKACQRFLD.

A disordered region spans residues 129-165; sequence QKPLSSPIEQSLPTSPGATSTSAQRSVSRSIDVPKRR. Residues 130–157 show a composition bias toward polar residues; the sequence is KPLSSPIEQSLPTSPGATSTSAQRSVSR. The Nuclear export signal signature appears at 171–180; sequence MDEMMAAMVL. The interval 209-245 is disordered; the sequence is KEGGDVSDSGSSTTSGHWSASSGVSTPSPPHTDASPK. Low complexity predominate over residues 214 to 231; that stretch reads VSDSGSSTTSGHWSASSG. The segment at 285-310 adopts a C2H2-type zinc-finger fold; that stretch reads YKCLWPNCGKLLRSIVGIKRHVKTQH.

The protein resides in the cytoplasm. It localises to the nucleus. The polypeptide is Zinc finger protein 395 (znf395) (Xenopus laevis (African clawed frog)).